The sequence spans 92 residues: Small ribosomal subunit protein bS18B (92 aa).

It belongs to the bacterial ribosomal protein bS18 family. As to quaternary structure, part of the 30S ribosomal subunit. Forms a tight heterodimer with protein bS6.

Functionally, binds as a heterodimer with protein bS6 to the central domain of the 16S rRNA, where it helps stabilize the platform of the 30S subunit. This Cupriavidus pinatubonensis (strain JMP 134 / LMG 1197) (Cupriavidus necator (strain JMP 134)) protein is Small ribosomal subunit protein bS18B.